Reading from the N-terminus, the 336-residue chain is Cell division protein ZipA (336 aa).

Residues 1 to 2 (ME) are Periplasmic-facing. The chain crosses the membrane as a helical span at residues 3 to 23 (LHILFFILAGLLIAVLISFSL). Residues 24 to 336 (WSARREKSRI…SRQSYLARVS (313 aa)) lie on the Cytoplasmic side of the membrane. Residues 56–77 (PSLNPQSYAQTTGQHGETEADN) form a disordered region. Positions 59–70 (NPQSYAQTTGQH) are enriched in polar residues.

It belongs to the ZipA family. Interacts with FtsZ via their C-terminal domains.

Its subcellular location is the cell inner membrane. Essential cell division protein that stabilizes the FtsZ protofilaments by cross-linking them and that serves as a cytoplasmic membrane anchor for the Z ring. Also required for the recruitment to the septal ring of downstream cell division proteins. This chain is Cell division protein ZipA, found in Actinobacillus pleuropneumoniae serotype 3 (strain JL03).